Reading from the N-terminus, the 129-residue chain is Small ribosomal subunit protein uS11 (129 aa).

Belongs to the universal ribosomal protein uS11 family. In terms of assembly, part of the 30S ribosomal subunit. Interacts with proteins S7 and S18. Binds to IF-3.

In terms of biological role, located on the platform of the 30S subunit, it bridges several disparate RNA helices of the 16S rRNA. Forms part of the Shine-Dalgarno cleft in the 70S ribosome. The protein is Small ribosomal subunit protein uS11 of Geobacillus sp. (strain WCH70).